The chain runs to 65 residues: Large ribosomal subunit protein bL35 (65 aa).

A disordered region spans residues 1 to 29; sequence MPKMKTNRGAAKRFKKTGSGRIKRGKAFT. The segment covering 10–26 has biased composition (basic residues); the sequence is AAKRFKKTGSGRIKRGK.

Belongs to the bacterial ribosomal protein bL35 family.

The polypeptide is Large ribosomal subunit protein bL35 (Desulfotalea psychrophila (strain LSv54 / DSM 12343)).